Here is a 219-residue protein sequence, read N- to C-terminus: MSIQIFCDFDGTITNSDNITSIMEHFAPPKAEEIKKQILAQELSIQEGVEQLFHLLPTNLHDDMIAFLKNNASIRSGFQEFVQFINKNDLSFYVILGGMDFFVHPLLDGLVPKEKIYCNETDFSKEYIEVKWPYPCDKHCNHHCGLCKSTLIRRLSSQQDFRIVIGDSITDLQAAKQADKVFARDFLITKCKEYHIPYTPFHTFYDIQNELQHLVEVKL.

The protein belongs to the HAD-like hydrolase superfamily. MtnX family.

The enzyme catalyses 2-hydroxy-5-methylsulfanyl-3-oxopent-1-enyl phosphate + H2O = 1,2-dihydroxy-5-(methylsulfanyl)pent-1-en-3-one + phosphate. It participates in amino-acid biosynthesis; L-methionine biosynthesis via salvage pathway; L-methionine from S-methyl-5-thio-alpha-D-ribose 1-phosphate: step 4/6. Functionally, dephosphorylates 2-hydroxy-3-keto-5-methylthiopentenyl-1-phosphate (HK-MTPenyl-1-P) yielding 1,2-dihydroxy-3-keto-5-methylthiopentene (DHK-MTPene). This Bacillus cytotoxicus (strain DSM 22905 / CIP 110041 / 391-98 / NVH 391-98) protein is 2-hydroxy-3-keto-5-methylthiopentenyl-1-phosphate phosphatase.